The following is a 214-amino-acid chain: rRNA N(6)-adenosine-methyltransferase metl-5 (214 aa).

S-adenosyl-L-methionine contacts are provided by residues glutamine 25, threonine 28, glycine 55, cysteine 58, aspartate 78, and 106-107 (DI).

It belongs to the methyltransferase superfamily. PrmA family. As to quaternary structure, heterodimer; heterodimerizes with TRMT112/C04H5.1.

It carries out the reaction adenosine in rRNA + S-adenosyl-L-methionine = N(6)-methyladenosine in rRNA + S-adenosyl-L-homocysteine + H(+). Its function is as follows. Catalytic subunit of a heterodimer with TRMT112/C04H5.1, which specifically methylates the 6th position of adenine in position 1717 of 18S rRNA. This chain is rRNA N(6)-adenosine-methyltransferase metl-5, found in Caenorhabditis elegans.